Reading from the N-terminus, the 661-residue chain is Fusaric acid cluster transcription factor FUB12 (661 aa).

Residues 17-48 (CVPCRTRKIKCNAAVVGLPCGSCVSRECPDEC) constitute a DNA-binding region (zn(2)-C6 fungal-type). Disordered regions lie at residues 56-132 (RTVK…PPGQ) and 151-184 (SAAQ…PQLD). Residues 73 to 98 (PDTNGSVLSPRQQQLPTNVSRQATDS) are compositionally biased toward polar residues. A compositionally biased stretch (basic and acidic residues) spans 99 to 109 (SHSDPVEESIH). Residues 110–119 (ASHTGSSLRN) show a composition bias toward polar residues. Residues 120 to 129 (DTPHSRDRRP) are compositionally biased toward basic and acidic residues.

Its subcellular location is the nucleus. In terms of biological role, transcription factor that is involved in the formation of the two Fusaric acid derivatives, dehydrofusaric acid and fusarinolic acid, serving as a detoxification mechanism. The polypeptide is Fusaric acid cluster transcription factor FUB12 (Gibberella moniliformis (strain M3125 / FGSC 7600) (Maize ear and stalk rot fungus)).